Reading from the N-terminus, the 279-residue chain is Probable endonuclease 4 (279 aa).

Zn(2+) is bound by residues H68, H108, E143, D177, H180, H214, D227, H229, and E259.

It belongs to the AP endonuclease 2 family. The cofactor is Zn(2+).

The enzyme catalyses Endonucleolytic cleavage to 5'-phosphooligonucleotide end-products.. Functionally, endonuclease IV plays a role in DNA repair. It cleaves phosphodiester bonds at apurinic or apyrimidinic (AP) sites, generating a 3'-hydroxyl group and a 5'-terminal sugar phosphate. This Nitrosopumilus maritimus (strain SCM1) protein is Probable endonuclease 4.